The following is a 34-amino-acid chain: Protamine-Y1/Y2 (34 aa).

Positions 1 to 34 (PRRRRQASRPVRRRRRYRRSTAARRRRRVVRRRR) are disordered.

As to expression, testis.

It localises to the nucleus. It is found in the chromosome. Its function is as follows. Protamines substitute for histones in the chromatin of sperm during the haploid phase of spermatogenesis. They compact sperm DNA into a highly condensed, stable and inactive complex. The sequence is that of Protamine-Y1/Y2 from Thunnus thynnus (Atlantic bluefin tuna).